Consider the following 799-residue polypeptide: Leucine--tRNA ligase (799 aa).

A 'HIGH' region motif is present at residues 39 to 50; it reads PYPSGAGLHMGH. Positions 575–579 match the 'KMSKS' region motif; it reads KMSKS. Residue K578 coordinates ATP.

It belongs to the class-I aminoacyl-tRNA synthetase family.

It localises to the cytoplasm. It catalyses the reaction tRNA(Leu) + L-leucine + ATP = L-leucyl-tRNA(Leu) + AMP + diphosphate. In Malacoplasma penetrans (strain HF-2) (Mycoplasma penetrans), this protein is Leucine--tRNA ligase.